A 121-amino-acid chain; its full sequence is Cell division protein FtsL (121 aa).

Residues 1-34 (MISRVTEALSKVKGSIGSNERHALPGVIGDDLLR) are Cytoplasmic-facing. Residues 35 to 57 (FGKLPLCLFICIILTAVTVVTTA) form a helical membrane-spanning segment. The Periplasmic portion of the chain corresponds to 58–121 (HHTRLLTAQR…PSQENIVVQK (64 aa)).

It belongs to the FtsL family. Part of a complex composed of FtsB, FtsL and FtsQ.

It localises to the cell inner membrane. Its function is as follows. Essential cell division protein. May link together the upstream cell division proteins, which are predominantly cytoplasmic, with the downstream cell division proteins, which are predominantly periplasmic. The protein is Cell division protein FtsL of Salmonella typhimurium (strain LT2 / SGSC1412 / ATCC 700720).